The primary structure comprises 444 residues: UDP-N-acetylmuramate--L-alanine ligase (444 aa).

110–116 lines the ATP pocket; it reads GAHGKTS.

It belongs to the MurCDEF family.

It is found in the cytoplasm. The catalysed reaction is UDP-N-acetyl-alpha-D-muramate + L-alanine + ATP = UDP-N-acetyl-alpha-D-muramoyl-L-alanine + ADP + phosphate + H(+). It participates in cell wall biogenesis; peptidoglycan biosynthesis. Functionally, cell wall formation. This is UDP-N-acetylmuramate--L-alanine ligase from Streptococcus sanguinis (strain SK36).